A 315-amino-acid chain; its full sequence is Ribosomal RNA small subunit methyltransferase H (315 aa).

Residues 61–63, aspartate 80, phenylalanine 108, aspartate 124, and glutamine 131 each bind S-adenosyl-L-methionine; that span reads GGH. Residues 291-315 are disordered; it reads PQPEEEEKNPRSRSAKLRFAQRKPL. The segment covering 301-315 has biased composition (basic residues); the sequence is RSRSAKLRFAQRKPL.

The protein belongs to the methyltransferase superfamily. RsmH family.

The protein localises to the cytoplasm. It catalyses the reaction cytidine(1402) in 16S rRNA + S-adenosyl-L-methionine = N(4)-methylcytidine(1402) in 16S rRNA + S-adenosyl-L-homocysteine + H(+). Functionally, specifically methylates the N4 position of cytidine in position 1402 (C1402) of 16S rRNA. The protein is Ribosomal RNA small subunit methyltransferase H of Crocosphaera subtropica (strain ATCC 51142 / BH68) (Cyanothece sp. (strain ATCC 51142)).